The sequence spans 290 residues: ATP synthase gamma chain (290 aa).

This sequence belongs to the ATPase gamma chain family. F-type ATPases have 2 components, CF(1) - the catalytic core - and CF(0) - the membrane proton channel. CF(1) has five subunits: alpha(3), beta(3), gamma(1), delta(1), epsilon(1). CF(0) has three main subunits: a, b and c.

It localises to the cell membrane. In terms of biological role, produces ATP from ADP in the presence of a proton gradient across the membrane. The gamma chain is believed to be important in regulating ATPase activity and the flow of protons through the CF(0) complex. In Roseiflexus sp. (strain RS-1), this protein is ATP synthase gamma chain.